A 197-amino-acid chain; its full sequence is Recombination protein RecR (197 aa).

The C4-type zinc finger occupies 56–71; it reads CQRCHSFSDEAVCPLC. One can recognise a Toprim domain in the interval 79-174; the sequence is TLLCVVETAA…KVTRLAQGVP (96 aa).

This sequence belongs to the RecR family.

In terms of biological role, may play a role in DNA repair. It seems to be involved in an RecBC-independent recombinational process of DNA repair. It may act with RecF and RecO. The protein is Recombination protein RecR of Psychrobacter cryohalolentis (strain ATCC BAA-1226 / DSM 17306 / VKM B-2378 / K5).